We begin with the raw amino-acid sequence, 532 residues long: Drimenyl diphosphate synthase (532 aa).

4 residues coordinate (2E,6E)-farnesyl diphosphate: arginine 121, lysine 122, glutamine 152, and tryptophan 154. Glutamate 158 provides a ligand contact to Mg(2+). PFTB repeat units lie at residues 275-317, 325-367, 428-469, and 475-518; these read PAAM…RVAG, IAAA…APNP, KRQA…SRDG, and LARA…CVLL. Residue aspartate 304 is the Proton donor of the active site. Arginine 502 contributes to the (2E,6E)-farnesyl diphosphate binding site.

The protein belongs to the terpene cyclase/mutase family. Mg(2+) serves as cofactor. Ni(2+) is required as a cofactor. The cofactor is Co(2+).

The enzyme catalyses (2E,6E)-farnesyl diphosphate = (5S,9S,10S)-drim-7-en-11-yl diphosphate. Catalyzes the cyclization of farnesyl diphosphate (FPP) to drimenyl diphosphate. The chain is Drimenyl diphosphate synthase from Streptantibioticus cattleyicolor (strain ATCC 35852 / DSM 46488 / JCM 4925 / NBRC 14057 / NRRL 8057) (Streptomyces cattleya).